A 385-amino-acid chain; its full sequence is Methionine aminopeptidase 1 (385 aa).

Residues 6–59 form a C6H2-type zinc finger; the sequence is SRVCETEGCSSEAKLQCPTCIKLGIQGSYFCSQECFKGSWATHKLLHKKAKDDK. Residues C9, C14, C22, C25, C36, C40, H48, and H52 each coordinate Zn(2+). H203 is a binding site for a protein. D220, D231, and H294 together coordinate Zn(2+). H301 serves as a coordination point for a protein. 2 residues coordinate Zn(2+): E327 and E358.

This sequence belongs to the peptidase M24A family. Methionine aminopeptidase type 1 subfamily. In terms of assembly, associates with the 60S ribosomal subunit of the 80S translational complex. Zn(2+) is required as a cofactor. Requires Co(2+) as cofactor. The cofactor is Mn(2+). Fe(2+) serves as cofactor.

The protein resides in the cytoplasm. It carries out the reaction Release of N-terminal amino acids, preferentially methionine, from peptides and arylamides.. Cotranslationally removes the N-terminal methionine from nascent proteins. The N-terminal methionine is often cleaved when the second residue in the primary sequence is small and uncharged (Met-Ala-, Cys, Gly, Pro, Ser, Thr, or Val). The polypeptide is Methionine aminopeptidase 1 (metap1) (Xenopus laevis (African clawed frog)).